A 305-amino-acid chain; its full sequence is Homoserine kinase (305 aa).

An ATP-binding site is contributed by 93–103; it reads PLSRGLGSSAT.

Belongs to the GHMP kinase family. Homoserine kinase subfamily.

It is found in the cytoplasm. It carries out the reaction L-homoserine + ATP = O-phospho-L-homoserine + ADP + H(+). It functions in the pathway amino-acid biosynthesis; L-threonine biosynthesis; L-threonine from L-aspartate: step 4/5. In terms of biological role, catalyzes the ATP-dependent phosphorylation of L-homoserine to L-homoserine phosphate. The protein is Homoserine kinase of Picosynechococcus sp. (strain ATCC 27264 / PCC 7002 / PR-6) (Agmenellum quadruplicatum).